The sequence spans 135 residues: Race-specific elicitor A4 (135 aa).

Residues Met-1–Ala-18 form the signal peptide. The propeptide occupies Gln-19 to Lys-29. Residues Gln-19 to Pro-39 form a disordered region. In terms of domain architecture, Chitin-binding type-2 spans Asp-47–Val-111. Cys-86 and Cys-101 are oxidised to a cystine. Positions Lys-112–Tyr-135 are disordered.

Its function is as follows. This necrosis-inducing peptide induces a hypersensitive response on Cf-4 tomato genotypes. Race-specific elicitors are compounds which only induce defense responses in genotypes of host plants which are resistant to the pathogenic race that produces the elicitor, but not in susceptible genotypes. This chain is Race-specific elicitor A4 (AVR4), found in Passalora fulva (Tomato leaf mold).